Consider the following 500-residue polypeptide: Protein DML1 (500 aa).

This sequence belongs to the misato family.

It localises to the mitochondrion. Involved in the partitioning of the mitochondrial organelle and mitochondrial DNA (mtDNA) inheritance. This chain is Protein DML1 (DML1), found in Scheffersomyces stipitis (strain ATCC 58785 / CBS 6054 / NBRC 10063 / NRRL Y-11545) (Yeast).